The sequence spans 1475 residues: MSGSNAKSSGTGFGSHIPSIEEKNKQIQQETMMEKLRAKYRNKPKSYEEIKKSVRMYFIEKHYPLDPLCKATLQSALDKLQHYIKVTSRHGLVERLESLSRQLGLKFMEDQQLLFISTDMFYVEILLDAAGSLSDVKVHHECKIEQQSSELVACLKSGDFADFTVQLEGLSSIYQLNAEPKVKKKAFVALQAMETDIQSLYQLHLQGHSGDSYSLMTSSSVGLVLPRRGGHPMRLTYFCPPLHLPEGDPKLASGDFTIDQVMRSSYGLSATINLEGSSANKLQTLPTVTLVRDAQTGLEVPTYAQLNQNNSLLMPATFVLRLNKPMPVCLESLKALGLPGLDSVATPPGPPTTVLNLIVQTASKQAIKNTQRGLYVNLPKETHCYFFTDNRKLQGTLVSSLPFTEPAQVPRIVAFLKKQALFYTLLASCVREQQKQYNDMDSTVILEVTAVSFNQITVELQHPYEESLATVDFLLEDGQPTCSVYCLTNEYELLSQKLTRTARKVVSIPMVIYKLLKCWDEEHEFKLHGAIGPGSGSGAIGGGGMSGGGPVSGVGNNFSQFSMDTPTPSDGSLPGGGFANINNLKMDAKSRSLADAFAASTSAAAAIAGLINLKRETDPQSGSSASGTTVSGSSSSSGSAKTSDHDIADKYKNIWKDKTPNLKHCVSITPIPGDGKSGSAGGVSGVEVQRTGGIEIIPLNAQAAIAGGGVTASSSATPTTITITPITGKDPSKDSTKKSTAASAGVGVAAKRPHESSTSSSSTSGCSGSGSSMSSSASSGSSDTQKEKKRKKKRDDSPMGPPEKIYSRQNSPAGGADASATGGVVRKFSSPSSSPKAGGGGQGLMAGVPTARPSPKHSPVYSSPKHNTASNSPKSPFGTHSPKHGSSGKPSMSTLKSAATAATILSPKGDKSSSAVGNTSSGPSASSGSSGATGLVRSFASVGAPPPPPPIPPLASSSGSISSSQSLKKEKTSSASGSSSTSSSATAGVASGGGISPASVAAAVAALKSSQQQMKSVASLSHLAAGGGLGSYAAPSGAGASGAAAVVVGAGAGAGAGASGLELSALRKGMAGGAVSLMTSTAALAPTIPAPTTTVAAGSAASLVSPVSAVVGQGQETAGAAAAATLATATILQQQPQPGAAPTSSCLTTSGGSSDSAGSINPAGASTEYMVKPSSQEGLKLTINKTGSSKSSGTGSGSSSSSGLQAKAKSSSSGATSFAGSTGSTKKQHTGLKPGVNSGPASKKATAAVSSATASSSKHFFQKANSSGNLSSKLSGSGSGGGIPLTKSNSTNSFQEHNAPRRRPSMGALASGSSGGGSGQRKLGSASGGGSGSSGSVSPALSGSMSQPPPRFDHHTDMMTILQYASPTMAASMEGFIKGLHNKFQIPKLSQRGSGGNTTSGRSTPSGSSEPALAGTSSSILGPIASSTGLTEPEAKPPVPPSQSGNEGLLNLSSTAGTPSADGIDEELLASLAGE.

The span at 1–10 (MSGSNAKSSG) shows a compositional bias: polar residues. Disordered regions lie at residues 1-26 (MSGS…KNKQ), 616-644 (ETDP…KTSD), 709-992 (GVTA…VASG), 1135-1166 (QPQP…AGAS), 1184-1245 (NKTG…SKKA), 1263-1354 (KANS…RFDH), and 1387-1475 (PKLS…LAGE). 3 stretches are compositionally biased toward low complexity: residues 621–641 (SGSS…GSAK), 711–729 (TASS…ITGK), and 738–782 (KSTA…SGSS). Ser-830, Ser-834, Ser-854, and Ser-858 each carry phosphoserine. Polar residues-rich tracts occupy residues 860–874 (VYSS…NSPK) and 888–897 (GKPSMSTLKS). Residues 919–934 (TSSGPSASSGSSGATG) show a composition bias toward low complexity. Residues 944–953 (APPPPPPIPP) show a composition bias toward pro residues. 5 stretches are compositionally biased toward low complexity: residues 954–966 (LASS…SSQS), 973–989 (SSAS…TAGV), 1143–1159 (TSSC…SAGS), 1185–1225 (KTGS…TGST), and 1265–1276 (NSSGNLSSKLSG). Residues 1286–1296 (TKSNSTNSFQE) show a composition bias toward polar residues. 2 stretches are compositionally biased toward low complexity: residues 1334–1346 (SGSV…GSMS) and 1399–1409 (TSGRSTPSGSS). Composition is skewed to polar residues over residues 1415-1430 (GTSS…STGL) and 1442-1458 (SQSG…TAGT).

This sequence belongs to the Mediator complex subunit 1 family. Component of the Mediator complex.

The protein resides in the nucleus. Functionally, component of the Mediator complex, a coactivator involved in the regulated transcription of nearly all RNA polymerase II-dependent genes. Mediator functions as a bridge to convey information from gene-specific regulatory proteins to the basal RNA polymerase II transcription machinery. Mediator is recruited to promoters by direct interactions with regulatory proteins and serves as a scaffold for the assembly of a functional preinitiation complex with RNA polymerase II and the general transcription factors. Required for activated transcription of the MtnA, MtnB and MtnD genes. This is Mediator of RNA polymerase II transcription subunit 1 (MED1) from Drosophila melanogaster (Fruit fly).